The following is a 511-amino-acid chain: Maturase K (511 aa).

This sequence belongs to the intron maturase 2 family. MatK subfamily.

The protein localises to the plastid. It is found in the chloroplast. Usually encoded in the trnK tRNA gene intron. Probably assists in splicing its own and other chloroplast group II introns. This Nardus stricta (Mat-grass) protein is Maturase K.